A 1161-amino-acid polypeptide reads, in one-letter code: Mitogen-activated protein kinase kinase kinase (1161 aa).

Positions 56-120 (GDGSLWTALY…PKDFVTDEDP (65 aa)) constitute an SH3 domain. A Protein kinase domain is found at 142–402 (LDIKEVIGSG…KEILKQLESI (261 aa)). Residues 148-156 (IGSGGFCKV) and lysine 169 each bind ATP. Aspartate 264 functions as the Proton acceptor in the catalytic mechanism. A Phosphothreonine; by autocatalysis modification is found at threonine 300. The residue at position 304 (serine 304) is a Phosphoserine; by autocatalysis. Leucine-zipper stretches follow at residues 426–447 (IAGV…EEQL) and 461–482 (LKIR…ELVM). Phosphoserine is present on residues serine 525 and serine 560. 2 disordered regions span residues 560–615 (SQLS…GSGG) and 658–678 (TTNN…NQLN). The segment covering 571–583 (AQTSTHSSFSKSA) has biased composition (polar residues). The span at 591–601 (QQQNQQQVASL) shows a compositional bias: low complexity. Phosphoserine occurs at positions 685, 773, and 792. The interval 790–830 (GNSPAVGRKKHSLDSSSHHPPANGSNSFALPNQLTLPSEDN) is disordered. Residues 812–830 (NGSNSFALPNQLTLPSEDN) are compositionally biased toward polar residues. A Phosphothreonine modification is found at threonine 862. Disordered regions lie at residues 988–1014 (RSAS…EAVN), 1045–1093 (EQRQ…SAGS), and 1137–1161 (GGSS…LERC). A compositionally biased stretch (low complexity) spans 989 to 1010 (SASPSLSSSSTTASASPSIAST). Serine 993 bears the Phosphoserine mark. Residues 1052–1063 (NQKKQRPKHITK) show a composition bias toward basic residues. Over residues 1073–1086 (GQHHEHDDHNDPQH) the composition is skewed to basic and acidic residues. Residues 1150–1161 (PQTQSCEQLERC) are compositionally biased toward polar residues.

It belongs to the protein kinase superfamily. STE Ser/Thr protein kinase family. MAP kinase kinase kinase subfamily. Homodimer. Requires Mg(2+) as cofactor. Autophosphorylation on serine and threonine residues within the activation loop plays a role in enzyme activation. In terms of tissue distribution, expressed both maternally and zygotically. Expressed uniformly in large quantities in the early embryo (stages 1-4). In the late embryo, expression is ubiquitous, but expression levels are dramatically reduced. Expressed in the adult head and thorax, and in S2 cells.

It catalyses the reaction L-seryl-[protein] + ATP = O-phospho-L-seryl-[protein] + ADP + H(+). The catalysed reaction is L-threonyl-[protein] + ATP = O-phospho-L-threonyl-[protein] + ADP + H(+). Homodimerization via the leucine zipper domains is required for autophosphorylation and subsequent activation. Activated by C6-ceramide. In terms of biological role, activates the JUN N-terminal pathway during dorsal closure. This is Mitogen-activated protein kinase kinase kinase from Drosophila melanogaster (Fruit fly).